Consider the following 367-residue polypeptide: Aspartate beta-hydroxylase domain-containing protein 1 (367 aa).

The interval 1–27 is disordered; the sequence is MWRGSSAGGSQGAAMEGTGGELGGQGN. The Cytoplasmic portion of the chain corresponds to 1–49; sequence MWRGSSAGGSQGAAMEGTGGELGGQGNWGLEDAPGLLARASLPIMPAWP. Residues 50-72 traverse the membrane as a helical segment; the sequence is LPLASSALTLLLGALTSLFLWYC. Residues 73 to 367 lie on the Lumenal side of the membrane; sequence YRLGSQDMQA…ALDFVFAPDP (295 aa). Residues 88-122 form a disordered region; the sequence is RAGAVGGRPGGCSEAGRPSPGRSGESGEGPRTEGL. Phosphoserine is present on Ser-106.

This sequence belongs to the aspartyl/asparaginyl beta-hydroxylase family.

It is found in the membrane. This is Aspartate beta-hydroxylase domain-containing protein 1 (ASPHD1) from Bos taurus (Bovine).